Here is a 353-residue protein sequence, read N- to C-terminus: RNA 3'-terminal phosphate cyclase (353 aa).

ATP-binding positions include Gln100 and 285 to 289 (HAADQ). The Tele-AMP-histidine intermediate role is filled by His311.

The protein belongs to the RNA 3'-terminal cyclase family. Type 1 subfamily.

The protein localises to the cytoplasm. The catalysed reaction is a 3'-end 3'-phospho-ribonucleotide-RNA + ATP = a 3'-end 2',3'-cyclophospho-ribonucleotide-RNA + AMP + diphosphate. Catalyzes the conversion of 3'-phosphate to a 2',3'-cyclic phosphodiester at the end of RNA. The mechanism of action of the enzyme occurs in 3 steps: (A) adenylation of the enzyme by ATP; (B) transfer of adenylate to an RNA-N3'P to produce RNA-N3'PP5'A; (C) and attack of the adjacent 2'-hydroxyl on the 3'-phosphorus in the diester linkage to produce the cyclic end product. The biological role of this enzyme is unknown but it is likely to function in some aspects of cellular RNA processing. This chain is RNA 3'-terminal phosphate cyclase, found in Nitrosospira multiformis (strain ATCC 25196 / NCIMB 11849 / C 71).